Here is an 86-residue protein sequence, read N- to C-terminus: Large ribosomal subunit protein eL43 (86 aa).

The C4-type zinc finger occupies 38 to 59; it reads CPVCGRKAVRRISTGIWQCQKC.

This sequence belongs to the eukaryotic ribosomal protein eL43 family. The cofactor is Zn(2+).

The protein is Large ribosomal subunit protein eL43 of Thermococcus onnurineus (strain NA1).